The following is a 347-amino-acid chain: Phenylalanine--tRNA ligase alpha subunit (347 aa).

Glu-261 contributes to the Mg(2+) binding site.

The protein belongs to the class-II aminoacyl-tRNA synthetase family. Phe-tRNA synthetase alpha subunit type 1 subfamily. In terms of assembly, tetramer of two alpha and two beta subunits. Mg(2+) serves as cofactor.

Its subcellular location is the cytoplasm. The catalysed reaction is tRNA(Phe) + L-phenylalanine + ATP = L-phenylalanyl-tRNA(Phe) + AMP + diphosphate + H(+). This Streptococcus equi subsp. zooepidemicus (strain MGCS10565) protein is Phenylalanine--tRNA ligase alpha subunit.